The primary structure comprises 149 residues: Ribosome maturation factor RimP (149 aa).

The protein belongs to the RimP family.

It is found in the cytoplasm. Required for maturation of 30S ribosomal subunits. The sequence is that of Ribosome maturation factor RimP from Neisseria gonorrhoeae (strain NCCP11945).